The chain runs to 318 residues: Ribosomal RNA small subunit methyltransferase H (318 aa).

Residues 35–37 (AGH), aspartate 55, phenylalanine 84, aspartate 105, and glutamine 112 contribute to the S-adenosyl-L-methionine site. The disordered stretch occupies residues 294–318 (SDSELSENNRSRSAKLRIAEKIKSR).

This sequence belongs to the methyltransferase superfamily. RsmH family.

The protein localises to the cytoplasm. The catalysed reaction is cytidine(1402) in 16S rRNA + S-adenosyl-L-methionine = N(4)-methylcytidine(1402) in 16S rRNA + S-adenosyl-L-homocysteine + H(+). Specifically methylates the N4 position of cytidine in position 1402 (C1402) of 16S rRNA. This chain is Ribosomal RNA small subunit methyltransferase H, found in Enterococcus faecalis (strain ATCC 700802 / V583).